The chain runs to 315 residues: Methionyl-tRNA formyltransferase (315 aa).

(6S)-5,6,7,8-tetrahydrofolate is bound at residue 113 to 116 (SILP).

The protein belongs to the Fmt family.

The enzyme catalyses L-methionyl-tRNA(fMet) + (6R)-10-formyltetrahydrofolate = N-formyl-L-methionyl-tRNA(fMet) + (6S)-5,6,7,8-tetrahydrofolate + H(+). Its function is as follows. Attaches a formyl group to the free amino group of methionyl-tRNA(fMet). The formyl group appears to play a dual role in the initiator identity of N-formylmethionyl-tRNA by promoting its recognition by IF2 and preventing the misappropriation of this tRNA by the elongation apparatus. The chain is Methionyl-tRNA formyltransferase from Vibrio vulnificus (strain CMCP6).